The chain runs to 293 residues: 1D-myo-inositol 2-acetamido-2-deoxy-alpha-D-glucopyranoside deacetylase (293 aa).

The Zn(2+) site is built by H15, D18, and H148.

Belongs to the MshB deacetylase family. Zn(2+) serves as cofactor.

It catalyses the reaction 1D-myo-inositol 2-acetamido-2-deoxy-alpha-D-glucopyranoside + H2O = 1D-myo-inositol 2-amino-2-deoxy-alpha-D-glucopyranoside + acetate. Catalyzes the deacetylation of 1D-myo-inositol 2-acetamido-2-deoxy-alpha-D-glucopyranoside (GlcNAc-Ins) in the mycothiol biosynthesis pathway. This is 1D-myo-inositol 2-acetamido-2-deoxy-alpha-D-glucopyranoside deacetylase from Corynebacterium diphtheriae (strain ATCC 700971 / NCTC 13129 / Biotype gravis).